Consider the following 209-residue polypeptide: Uracil phosphoribosyltransferase (209 aa).

Residues R79, R104, and 131–139 (DPMLATGGT) each bind 5-phospho-alpha-D-ribose 1-diphosphate. Residues I194 and 199-201 (GDA) each bind uracil. Position 200 (D200) interacts with 5-phospho-alpha-D-ribose 1-diphosphate.

It belongs to the UPRTase family. The cofactor is Mg(2+).

The catalysed reaction is UMP + diphosphate = 5-phospho-alpha-D-ribose 1-diphosphate + uracil. It functions in the pathway pyrimidine metabolism; UMP biosynthesis via salvage pathway; UMP from uracil: step 1/1. Its activity is regulated as follows. Allosterically activated by GTP. Its function is as follows. Catalyzes the conversion of uracil and 5-phospho-alpha-D-ribose 1-diphosphate (PRPP) to UMP and diphosphate. The protein is Uracil phosphoribosyltransferase of Pseudoalteromonas atlantica (strain T6c / ATCC BAA-1087).